Reading from the N-terminus, the 231-residue chain is Enolase-phosphatase E1 (231 aa).

It belongs to the HAD-like hydrolase superfamily. MasA/MtnC family. In terms of assembly, monomer. Mg(2+) serves as cofactor.

It carries out the reaction 5-methylsulfanyl-2,3-dioxopentyl phosphate + H2O = 1,2-dihydroxy-5-(methylsulfanyl)pent-1-en-3-one + phosphate. It functions in the pathway amino-acid biosynthesis; L-methionine biosynthesis via salvage pathway; L-methionine from S-methyl-5-thio-alpha-D-ribose 1-phosphate: step 3/6. Its pathway is amino-acid biosynthesis; L-methionine biosynthesis via salvage pathway; L-methionine from S-methyl-5-thio-alpha-D-ribose 1-phosphate: step 4/6. Its function is as follows. Bifunctional enzyme that catalyzes the enolization of 2,3-diketo-5-methylthiopentyl-1-phosphate (DK-MTP-1-P) into the intermediate 2-hydroxy-3-keto-5-methylthiopentenyl-1-phosphate (HK-MTPenyl-1-P), which is then dephosphorylated to form the acireductone 1,2-dihydroxy-3-keto-5-methylthiopentene (DHK-MTPene). In Granulibacter bethesdensis (strain ATCC BAA-1260 / CGDNIH1), this protein is Enolase-phosphatase E1.